The chain runs to 420 residues: MSFETISVIGLGYIGLPTAAAFASRKKKVIGVDVNAHAVETINRGAIHIVEPDLDKVVKIAVEGGYLQAVTKPQAADAFLIAVPTPFKGDHEPDMIFVESAAKSIAPVLKKGDLVILESTSPVGATEQMAQWLAEARPDLSFPQQAGEAADINIAYCPERVLPGQVMVELIQNDRVIGGMTPKCSARASALYKIFLEGECVVTNSRTAEMCKLTENSFRDVNIAFANELSLICDEQGINVWELIRLANRHPRVNILQPGPGVGGHCIAVDPWFIVSQNPQLARLIHTARLVNDGKPLWVVDRVKAAVADCLAASDKRASEVKIACFGLAFKPDIDDLRESPAVGVARLIAEWHVGETLVVEPNVEQLPKSLMGLVTLKDTATALQQADVLVMLVDHKQFKAIKPEDIKQQWIVDTKGVWR.

Positions 13, 14, 33, 85, and 126 each coordinate NAD(+). Residues Arg-160, Val-161, Lys-212, Asn-216, Arg-219, His-250, Arg-252, and Gly-263 each coordinate UDP-N-acetyl-alpha-D-mannosaminouronate. Lys-212 (proton donor/acceptor) is an active-site residue. The Nucleophile role is filled by Cys-266. Residues Phe-330 and Lys-331 each coordinate UDP-N-acetyl-alpha-D-mannosaminouronate. Arg-338 contacts NAD(+). Residue Lys-416 coordinates UDP-N-acetyl-alpha-D-mannosaminouronate.

The protein belongs to the UDP-glucose/GDP-mannose dehydrogenase family. WecC subfamily. In terms of assembly, homodimer.

The catalysed reaction is UDP-N-acetyl-alpha-D-mannosamine + 2 NAD(+) + H2O = UDP-N-acetyl-alpha-D-mannosaminouronate + 2 NADH + 3 H(+). The protein operates within bacterial outer membrane biogenesis; enterobacterial common antigen biosynthesis. In terms of biological role, catalyzes the four-electron oxidation of UDP-N-acetyl-D-mannosamine (UDP-ManNAc), reducing NAD(+) and releasing UDP-N-acetylmannosaminuronic acid (UDP-ManNAcA). The protein is UDP-N-acetyl-D-mannosamine dehydrogenase of Yersinia pestis.